We begin with the raw amino-acid sequence, 84 residues long: Extender of the chronological lifespan protein 2 (84 aa).

The protein belongs to the ecl1 family.

The protein localises to the nucleus. In terms of biological role, involved in chronological cell aging. This Schizosaccharomyces pombe (strain 972 / ATCC 24843) (Fission yeast) protein is Extender of the chronological lifespan protein 2 (ecl2).